The following is a 780-amino-acid chain: Cyclin-F (780 aa).

A Nuclear localization signal 1 motif is present at residues 20 to 28 (KRRIKRRPR). The F-box domain occupies 29–76 (NLTILSLPEDVLFHILKWLSVGDILAVRAVHSHLKYLVDNHASVWASA). Residues 288 to 405 (QASQAVNKQQ…EIISALEGKI (118 aa)) enclose the Cyclin N-terminal domain. 3 short sequence motifs (d box) span residues 310 to 313 (RYIL), 343 to 346 (RRRL), and 349 to 352 (RYKL). Disordered regions lie at residues 544–594 (QESP…AELS), 651–733 (QESS…STKP), and 745–780 (CRPP…FLKL). Residues 568 to 574 (RRSKRKR) carry the Nuclear localization signal 2 motif. The segment at 582–761 (RGSFVTTPTA…ESGAHQQPVK (180 aa)) is PEST. Polar residues predominate over residues 585-594 (FVTTPTAELS). 2 stretches are compositionally biased toward low complexity: residues 695–708 (SGYS…PISS) and 719–731 (STSV…HSST). The D box 4 motif lies at 762 to 765 (RQNL).

The protein belongs to the cyclin family. Cyclin AB subfamily. In terms of assembly, component of the SCF(CCNF) complex consisting of CUL1, RBX1, SKP1 and CCNF. Interacts with SKP1. Interacts with CUL1. Interacts with CCNB1; interaction is required for nuclear localization of CCNB1. Interacts with CCP110; this interaction leads to CCP110 ubiquitination and degradation via the proteasome pathway. Interacts (via the Cyclin N-terminal domain) with MYBL2/BMYB. Interacts with FZR1/CDH1 (via N-terminus). Interacts with RRM2 (via Cy motif and when phosphorylated at 'Thr-33'); the interaction occurs exclusively in G2 and early M. Interacts with CDC6 (via Cy motif); the interaction takes place during G2 and M phase. Degraded when the spindle assembly checkpoint is activated during the G2-M transition. Degradation is not dependent on the proteasome or ubiquitin and depends on the C-terminal PEST sequence. In terms of processing, phosphorylated just before cells enter into mitosis. Post-translationally, ubiquitinated by the anaphase-promoting complex (APC/C); leading to its degradation by the proteasome.

The protein localises to the nucleus. Its subcellular location is the cytoplasm. It localises to the perinuclear region. It is found in the cytoskeleton. The protein resides in the microtubule organizing center. The protein localises to the centrosome. Its subcellular location is the centriole. Its function is as follows. Substrate recognition component of a SCF (SKP1-CUL1-F-box protein) E3 ubiquitin-protein ligase complex which mediates the ubiquitination and subsequent proteasomal degradation of target proteins. The SCF(CCNF) E3 ubiquitin-protein ligase complex is an integral component of the ubiquitin proteasome system (UPS) and links proteasome degradation to the cell cycle. Mediates the substrate recognition and the proteasomal degradation of various target proteins involved in the regulation of cell cycle progression and in the maintenance of genome stability. Mediates the ubiquitination and subsequent proteasomal degradation of CP110 during G2 phase, thereby acting as an inhibitor of centrosome reduplication. In G2, mediates the ubiquitination and proteasomal degradation of CDC6, thereby suppressing DNA re-replication and preventing genome instability. Involved in the ubiquitination and degradation of the substrate adapter CDH1 of the anaphase-promoting complex (APC/C), thereby acting as an antagonist of APC/C in regulating G1 progression and S phase entry. May play a role in the G2 cell cycle checkpoint control after DNA damage, possibly by promoting the ubiquitination of MYBL2/BMYB. The chain is Cyclin-F (Ccnf) from Rattus norvegicus (Rat).